The following is a 310-amino-acid chain: HTH-type transcriptional activator TtdR (310 aa).

An HTH lysR-type domain is found at 6 to 63; the sequence is PLAKDLQVLVEIVHSGSFSAAAATLGQTPAFVTKRIQILENTLATTLLNRSARGVALT. The H-T-H motif DNA-binding region spans 23–42; sequence FSAAAATLGQTPAFVTKRIQ.

The protein belongs to the LysR transcriptional regulatory family.

In terms of biological role, positive regulator required for L-tartrate-dependent anaerobic growth on glycerol. Induces expression of the ttdA-ttdB-ygjE operon. The protein is HTH-type transcriptional activator TtdR (ttdR) of Escherichia coli O6:H1 (strain CFT073 / ATCC 700928 / UPEC).